The following is a 2313-amino-acid chain: Voltage-dependent R-type calcium channel subunit alpha-1E (2313 aa).

Residues 1-38 (MARFGEAVVARPGSGDGDSDQSRNRQGTPVPASGQAAA) form a disordered region. Residues 1–89 (MARFGEAVVA…KYAKKLIDWP (89 aa)) lie on the Cytoplasmic side of the membrane. Residues Ser-14 and Ser-19 each carry the phosphoserine modification. The stretch at 76-354 (NIVRKYAKKL…LVLGVLSGEF (279 aa)) is one I repeat. The helical transmembrane segment at 90–108 (PFEYMILATIIANCIVLAL) threads the bilayer. Residues 109–127 (EQHLPEDDKTPMSRRLEKT) are Extracellular-facing. A helical transmembrane segment spans residues 128–146 (EPYFIGIFCFEAGIKIVAL). Residues 147 to 158 (GFIFHKGSYLRN) lie on the Cytoplasmic side of the membrane. A helical transmembrane segment spans residues 159 to 173 (GWNVMDFIVVLSGIL). At 174-185 (ATAGTHFNTHVD) the chain is on the extracellular side. The helical transmembrane segment at 186-205 (LRTLRAVRVLRPLKLVSGIP) threads the bilayer. At 206-223 (SLQIVLKSIMKAMVPLLQ) the chain is on the cytoplasmic side. The chain crosses the membrane as a helical span at residues 224-244 (IGLLLFFAILMFAIIGLEFYS). Residues 245–326 (GKLHRACFMN…NTNDALGATW (82 aa)) lie on the Extracellular side of the membrane. A glycan (N-linked (GlcNAc...) asparagine) is linked at Asn-254. The chain crosses the membrane as a helical span at residues 327–350 (NWLYFIPLIIIGSFFVLNLVLGVL). The Cytoplasmic segment spans residues 351–476 (SGEFAKERER…ISIRHMVKSQ (126 aa)). The interval 374 to 391 (QQIERELNGYRAWIDKAE) is binding to the beta subunit. Asp-426 provides a ligand contact to Ca(2+). Position 427 is a phosphoserine (Ser-427). Residues Ser-428, Glu-430, and Cys-432 each contribute to the Ca(2+) site. A Phosphothreonine modification is found at Thr-440. The II repeat unit spans residues 462-706 (ERLLRISIRH…VFLAIAVDNL (245 aa)). Residues 477–496 (VFYWIVLSLVALNTACVAIV) form a helical membrane-spanning segment. Residues 497–509 (HHNQPQWLTHLLY) lie on the Extracellular side of the membrane. Residues 510 to 529 (YAEFLFLGLFLLEMSLKMYG) form a helical membrane-spanning segment. Residues 530–538 (MGPRLYFHS) are Cytoplasmic-facing. Residues 539–557 (SFNCFDFGVTVGSIFEVVW) traverse the membrane as a helical segment. Residues 558–567 (AIFRPGTSFG) lie on the Extracellular side of the membrane. A helical transmembrane segment spans residues 568–586 (ISVLRALRLLRIFKITKYW). The Cytoplasmic portion of the chain corresponds to 587-605 (ASLRNLVVSLMSSMKSIIS). Residues 606–625 (LLFLLFLFIVVFALLGMQLF) form a helical membrane-spanning segment. The Extracellular portion of the chain corresponds to 626 to 678 (GGRFNFNDGTPSANFDTFPAAIMTVFQILTGEDWNEVMYNGIRSQGGVSSGMW). Residues 679-703 (SAIYFIVLTLFGNYTLLNVFLAIAV) form a helical membrane-spanning segment. Residues 704–1148 (DNLANAQELT…TNPIRRACHY (445 aa)) lie on the Cytoplasmic side of the membrane. The segment at 729–774 (LQKAKEVSPMSAPNMPSIERDRRRRHHMSMWEPRSSHLRERRRRHH) is disordered. Residues Ser-736, Ser-745, Ser-793, Ser-815, and Ser-855 each carry the phosphoserine modification. Residues 851 to 984 (SRGGSLKGDG…EERAQDLRRT (134 aa)) form a disordered region. Positions 866–875 (ALDNQRTPLS) are enriched in polar residues. A compositionally biased stretch (basic residues) spans 913–926 (RHRQSQRRSRHRRV). Low complexity predominate over residues 933–945 (SSSASRSRSASQE). Ser-947 is modified (phosphoserine). Residues 955-983 (EGEKDHELRGNHGAKEPTIQEERAQDLRR) show a composition bias toward basic and acidic residues. A Phosphoserine modification is found at Ser-1097. A disordered region spans residues 1103-1125 (EIREDEEEVEKKKQKKEKRETGK). The III repeat unit spans residues 1140–1426 (NPIRRACHYI…IFVALIIITF (287 aa)). Residues 1149 to 1165 (IVNLRYFEMCILLVIAA) traverse the membrane as a helical segment. At 1166–1189 (SSIALAAEDPVLTNSERNKVLRYF) the chain is on the extracellular side. Residues 1190-1209 (DYVFTGVFTFEMVIKMIDQG) traverse the membrane as a helical segment. At 1210–1217 (LILQDGSY) the chain is on the cytoplasmic side. Residues 1218–1240 (FRDLWNILDFVVVVGALVAFALA) form a helical membrane-spanning segment. Topologically, residues 1241-1254 (NALGTNKGRDIKTI) are extracellular. The helical transmembrane segment at 1255-1272 (KSLRVLRVLRPLKTIKRL) threads the bilayer. Over 1273–1291 (PKLKAVFDCVVTSLKNVFN) the chain is Cytoplasmic. Residues 1292 to 1311 (ILIVYKLFMFIFAVIAVQLF) form a helical membrane-spanning segment. Topologically, residues 1312 to 1398 (KGKFFYCTDS…RGPSRSNRME (87 aa)) are extracellular. The helical transmembrane segment at 1399–1422 (MSIFYVVYFVVFPFFFVNIFVALI) threads the bilayer. Residues 1423 to 1479 (IITFQEQGDKMMEECSLEKNERACIDFAISAKPLTRYMPQNRHTFQYRVWHFVVSPS) lie on the Cytoplasmic side of the membrane. Residues 1463-1726 (NRHTFQYRVW…LFVAVIMDNF (264 aa)) form an IV repeat. The helical transmembrane segment at 1480 to 1498 (FEYTIMAMIALNTVVLMMK) threads the bilayer. Residues 1499-1513 (YYSAPCTYELALKYL) are Extracellular-facing. The chain crosses the membrane as a helical span at residues 1514–1533 (NIAFTMVFSLECVLKVIAFG). Topologically, residues 1534 to 1541 (FLNYFRDT) are cytoplasmic. The chain crosses the membrane as a helical span at residues 1542-1560 (WNIFDFITVIGSITEIILT). At 1561 to 1571 (DSKLVNTSGFN) the chain is on the extracellular side. N-linked (GlcNAc...) asparagine glycosylation is found at Asn-1566 and Asn-1571. The chain crosses the membrane as a helical span at residues 1572–1590 (MSFLKLFRAARLIKLLRQG). The Cytoplasmic segment spans residues 1591–1609 (YTIRILLWTFVQSFKALPY). Residues 1610 to 1629 (VCLLIAMLFFIYAIIGMQVF) traverse the membrane as a helical segment. The Extracellular portion of the chain corresponds to 1630-1698 (GNIKLDEESH…NENERCGTDL (69 aa)). Residues 1699 to 1724 (AYVYFVSFIFFCSFLMLNLFVAVIMD) form a helical membrane-spanning segment. Residues 1725 to 2313 (NFEYLTRDSS…LSDTEEDDKC (589 aa)) lie on the Cytoplasmic side of the membrane. In terms of domain architecture, EF-hand spans 1739–1774 (HHLDEFVRVWAEYDRAACGRIHYTEMYEMLTLMSPP). Ca(2+) contacts are provided by Asp-1752, Arg-1758, and Glu-1763. Disordered regions lie at residues 1970–2170 (VSEL…RPLL), 2206–2225 (CLTE…ASPQ), and 2263–2295 (SNTI…GPGM). The span at 2012–2023 (TDPSSMRRSFST) shows a compositional bias: polar residues. A compositionally biased stretch (low complexity) spans 2055–2064 (HSSLRLSAHR). Basic and acidic residues predominate over residues 2065 to 2085 (LNSDSGHKSDTHRSGGRERGR). Phosphoserine is present on residues Ser-2094 and Ser-2113. Basic and acidic residues predominate over residues 2101 to 2118 (NSEERGTQADWESPERRQ). Over residues 2129-2152 (TPNRQGTGSLSESSIPSVSDTSTP) the composition is skewed to polar residues. The segment covering 2210–2225 (SSNSPHPQQSQHASPQ) has biased composition (low complexity).

Belongs to the calcium channel alpha-1 subunit (TC 1.A.1.11) family. CACNA1E subfamily. Interacts with EFHC1. Voltage-dependent calcium channels are multisubunit complexes, consisting of alpha-1, alpha-2, beta and delta subunits in a 1:1:1:1 ratio. The channel activity is directed by the pore-forming and voltage-sensitive alpha-1 subunit. In many cases, this subunit is sufficient to generate voltage-sensitive calcium channel activity. The auxiliary subunits beta and alpha-2/delta linked by a disulfide bridge regulate the channel activity. Expressed in neuronal tissues and in kidney.

It localises to the membrane. It carries out the reaction Ca(2+)(in) = Ca(2+)(out). Functionally, voltage-sensitive calcium channels (VSCC) mediate the entry of calcium ions into excitable cells. They are also involved in a variety of calcium-dependent processes, including muscle contraction, hormone or neurotransmitter release, gene expression, cell motility, cell division and cell death. The isoform alpha-1E gives rise to R-type calcium currents. R-type calcium channels belong to the 'high-voltage activated' (HVA) group and are blocked by nickel. They are however insensitive to dihydropyridines (DHP). Calcium channels containing alpha-1E subunit could be involved in the modulation of firing patterns of neurons which is important for information processing. Its function is as follows. Voltage-sensitive calcium channels (VSCC) mediate the entry of calcium ions into excitable cells. They are also involved in a variety of calcium-dependent processes, including muscle contraction, hormone or neurotransmitter release, gene expression, cell motility, cell division and cell death. The isoform alpha-1E gives rise to R-type calcium currents. The sequence is that of Voltage-dependent R-type calcium channel subunit alpha-1E (CACNA1E) from Homo sapiens (Human).